A 748-amino-acid polypeptide reads, in one-letter code: Cysteine--tRNA ligase, cytoplasmic (748 aa).

A disordered region spans residues 1–25; sequence MADSSGQQGKGRRVQPQWSPPAGTQ. Ala-2 carries the post-translational modification N-acetylalanine. Ser-19 bears the Phosphoserine mark. Residue Cys-55 coordinates Zn(2+). Gly-56 provides a ligand contact to L-cysteine. Positions 57-67 match the 'HIGH' region motif; the sequence is PTVYDASHMGH. The residue at position 79 (Arg-79) is a Phosphoserine. Thr-96 contacts L-cysteine. A 'KIIK' region motif is present at residues 101–104; sequence KIIK. Residues Ser-305 and Ser-307 each carry the phosphoserine modification. Zn(2+) contacts are provided by Cys-348, His-373, and Glu-377. His-373 lines the L-cysteine pocket. The 'KMSKS' region motif lies at 406-410; it reads KMSKS. Lys-409 contacts ATP. Lys-503 carries the post-translational modification N6-acetyllysine. The segment covering 653–679 has biased composition (basic and acidic residues); the sequence is EKRRVEEEKRKKKEEAARRKQEQEAAK. The segment at 653 to 686 is disordered; that stretch reads EKRRVEEEKRKKKEEAARRKQEQEAAKLAKMKIP. Phosphoserine is present on Ser-746.

It belongs to the class-I aminoacyl-tRNA synthetase family. In terms of assembly, homodimer. It depends on Zn(2+) as a cofactor.

The protein resides in the cytoplasm. It catalyses the reaction tRNA(Cys) + L-cysteine + ATP = L-cysteinyl-tRNA(Cys) + AMP + diphosphate. Its function is as follows. Catalyzes the ATP-dependent ligation of cysteine to tRNA(Cys). This is Cysteine--tRNA ligase, cytoplasmic from Homo sapiens (Human).